A 452-amino-acid polypeptide reads, in one-letter code: Maltoporin (452 aa).

Residues 1–25 (MMITLRKLPLAVAVAAGVMSAQAMA) form the signal peptide.

It belongs to the porin LamB (TC 1.B.3) family. As to quaternary structure, homotrimer formed of three 18-stranded antiparallel beta-barrels, containing three independent channels.

The protein resides in the cell outer membrane. It catalyses the reaction beta-maltose(in) = beta-maltose(out). Functionally, involved in the transport of maltose and maltodextrins. The chain is Maltoporin from Salmonella paratyphi A (strain ATCC 9150 / SARB42).